The sequence spans 197 residues: Imidazoleglycerol-phosphate dehydratase (197 aa).

The protein belongs to the imidazoleglycerol-phosphate dehydratase family.

The protein localises to the cytoplasm. It carries out the reaction D-erythro-1-(imidazol-4-yl)glycerol 3-phosphate = 3-(imidazol-4-yl)-2-oxopropyl phosphate + H2O. Its pathway is amino-acid biosynthesis; L-histidine biosynthesis; L-histidine from 5-phospho-alpha-D-ribose 1-diphosphate: step 6/9. The protein is Imidazoleglycerol-phosphate dehydratase of Syntrophus aciditrophicus (strain SB).